Here is a 483-residue protein sequence, read N- to C-terminus: Glutamate--tRNA ligase (483 aa).

Positions 9–19 (PSPTGYLHIGN) match the 'HIGH' region motif. The short motif at 250–254 (KLSKR) is the 'KMSKS' region element. K253 provides a ligand contact to ATP.

This sequence belongs to the class-I aminoacyl-tRNA synthetase family. Glutamate--tRNA ligase type 1 subfamily. As to quaternary structure, monomer.

Its subcellular location is the cytoplasm. It carries out the reaction tRNA(Glu) + L-glutamate + ATP = L-glutamyl-tRNA(Glu) + AMP + diphosphate. Functionally, catalyzes the attachment of glutamate to tRNA(Glu) in a two-step reaction: glutamate is first activated by ATP to form Glu-AMP and then transferred to the acceptor end of tRNA(Glu). The polypeptide is Glutamate--tRNA ligase (Blochmanniella floridana).